The chain runs to 1209 residues: DNA-directed RNA polymerase subunit beta' (1209 aa).

Zn(2+)-binding residues include cysteine 60, cysteine 62, cysteine 75, and cysteine 78. Residues aspartate 450, aspartate 452, and aspartate 454 each coordinate Mg(2+). 4 residues coordinate Zn(2+): cysteine 819, cysteine 893, cysteine 900, and cysteine 903.

Belongs to the RNA polymerase beta' chain family. In terms of assembly, the RNAP catalytic core consists of 2 alpha, 1 beta, 1 beta' and 1 omega subunit. When a sigma factor is associated with the core the holoenzyme is formed, which can initiate transcription. Mg(2+) is required as a cofactor. It depends on Zn(2+) as a cofactor.

It catalyses the reaction RNA(n) + a ribonucleoside 5'-triphosphate = RNA(n+1) + diphosphate. DNA-dependent RNA polymerase catalyzes the transcription of DNA into RNA using the four ribonucleoside triphosphates as substrates. The sequence is that of DNA-directed RNA polymerase subunit beta' from Streptococcus mutans serotype c (strain ATCC 700610 / UA159).